A 220-amino-acid polypeptide reads, in one-letter code: UPF0319 protein YccT (220 aa).

Residues 1-20 (MKTGALATFLALCLPVTVFA) form the signal peptide.

This sequence belongs to the UPF0319 family.

This chain is UPF0319 protein YccT, found in Salmonella paratyphi A (strain ATCC 9150 / SARB42).